Here is a 247-residue protein sequence, read N- to C-terminus: Probable transcriptional regulatory protein YPK_2146 (247 aa).

It belongs to the TACO1 family.

It localises to the cytoplasm. This Yersinia pseudotuberculosis serotype O:3 (strain YPIII) protein is Probable transcriptional regulatory protein YPK_2146.